Consider the following 172-residue polypeptide: Zinc finger protein 580 (172 aa).

The interval 1–92 is disordered; it reads MLLLPPRPPH…PGEPGPRKGY (92 aa). The segment covering 19 to 30 has biased composition (pro residues); that stretch reads MDPPPPKTPPFP. Lys-31 is covalently cross-linked (Glycyl lysine isopeptide (Lys-Gly) (interchain with G-Cter in SUMO2)). A C2H2-type 1 zinc finger spans residues 92–114; it reads YSCPECARVFASPLRLQSHRVSH. Residue Lys-118 forms a Glycyl lysine isopeptide (Lys-Gly) (interchain with G-Cter in SUMO2) linkage. 2 consecutive C2H2-type zinc fingers follow at residues 120–142 and 150–172; these read FTCGACGKAFKRSSHLSRHRATH and HTCPLCPRRFQDAAELAQHVRLH.

In terms of assembly, interacts with SMAD2.

The protein localises to the nucleus. In terms of biological role, involved in the regulation of endothelial cell proliferation and migration. Mediates H(2)O(2)-induced leukocyte chemotaxis by elevating interleukin-8 production and may play a role in inflammation. May be involved in transcriptional regulation. In Mus musculus (Mouse), this protein is Zinc finger protein 580 (Znf580).